The sequence spans 371 residues: MEGKLSMDSQILEEVIRSGNIPCHGRTGMLCAGGGLLPPALLDESRVPKFYLDALVASGGTSSTALPNTGLVYNLMGTSGLPKDVLSHIWSAVNRAKPGQLTRPEFFSLLALIALAQKGESLAALCAMDSLPIPYLNPVQAFPTASNPAPTTNTSSSFVPFGKIKPSAFIPTSLLPRRSMRKKKESDSKEVSAHNSPAKGAAHDLAGLDFGSDISSMKEEIKDINETPTQSCWRETVHAIYIVVEEANQLFKDSKKEVIQEISETEKGSAYFKSLSKAFDTLERVCKSAGVQLSVQSTKEAEYCRNLRRKWETFMDTTPEQNVEMTDDRKCAICCQPVQNPIDYGGQCFDVTCANLWVNGVSSTLPSLHLK.

In terms of domain architecture, EH spans 43-148 (DESRVPKFYL…VQAFPTASNP (106 aa)). The disordered stretch occupies residues 179–205 (SMRKKKESDSKEVSAHNSPAKGAAHDL).

This is an uncharacterized protein from Caenorhabditis elegans.